The following is a 254-amino-acid chain: Axonemal dynein light intermediate polypeptide 1 (254 aa).

Residues 1 to 55 (MIPPADSLLKHDNPVLISKNTERKSPKSRPLKVSSPQTVLTAPVPPPPKPKTPLL) form a disordered region. Positions 175–245 (ALQAEQGKSD…KRTNQQLKAQ (71 aa)) form a coiled coil.

It belongs to the inner dynein arm light chain family.

It is found in the cell projection. It localises to the cilium. The protein resides in the flagellum. Its subcellular location is the dynein axonemal particle. The protein localises to the cytoplasm. Its function is as follows. Involved in sperm flagellum assembly. This is Axonemal dynein light intermediate polypeptide 1 from Xenopus laevis (African clawed frog).